We begin with the raw amino-acid sequence, 511 residues long: MEKFEGYSEKHKSRQQYFVYPLLFQEYIYAFAHDYGLNGSEPVEIVSCNNKKFSSLLVKRLIIRMYQQNFLDNSVNHPNQDRLLDYKNYFYSEFYSQILSEGFAIVVEIPFSLRELSCPKEKEIPKFQNLRSIHSIFPFLEDKFLHLDYLSHIEIPYPIHLEILVQLLQYRIQDVPSLHLLRFFLNYYSNWNSFITSMKSIFFFQKENKRLFKFLYNSYVSEYEFFLLFLRKQSSCLPLASSGTFLERIHFSRKMEHFGIMYPGFSRKTLWFFMDPLMHYVRYQGKAILASKGSFFLKKKWKCYLINFWQYYFFFWTQPRRIHINQLANSCFDFMGYLSSVPKSPLLVRNQMLENSFLIDTRMKKFDTIVPATLLIGYLSKAQFCTGSGHPISKPIWTDLSDWDILDRFGRICRNLFHYHSGSSKKRTLYRLKYILRLSCARTLARKHKSTVRTFMQRLGSAFLEEFFTEEEQVFSLMFTKTTLFSFSGSHTERIWYLDIIRINDLVNPLN.

Belongs to the intron maturase 2 family. MatK subfamily.

It is found in the plastid. The protein resides in the chloroplast. Functionally, usually encoded in the trnK tRNA gene intron. Probably assists in splicing its own and other chloroplast group II introns. This Hordeum murinum subsp. leporinum (Mouse barley) protein is Maturase K.